The following is a 122-amino-acid chain: Large ribosomal subunit protein uL14 (122 aa).

The protein belongs to the universal ribosomal protein uL14 family. As to quaternary structure, part of the 50S ribosomal subunit. Forms a cluster with proteins L3 and L19. In the 70S ribosome, L14 and L19 interact and together make contacts with the 16S rRNA in bridges B5 and B8.

Its function is as follows. Binds to 23S rRNA. Forms part of two intersubunit bridges in the 70S ribosome. The sequence is that of Large ribosomal subunit protein uL14 from Sphingopyxis alaskensis (strain DSM 13593 / LMG 18877 / RB2256) (Sphingomonas alaskensis).